Reading from the N-terminus, the 248-residue chain is DNA repair protein RecO (248 aa).

Belongs to the RecO family.

In terms of biological role, involved in DNA repair and RecF pathway recombination. The protein is DNA repair protein RecO of Rubrobacter xylanophilus (strain DSM 9941 / JCM 11954 / NBRC 16129 / PRD-1).